A 553-amino-acid chain; its full sequence is 5'-nucleotidase (553 aa).

The signal sequence occupies residues 1-21 (MKQGLILKSVLSAAIIASLAG). C22 carries N-palmitoyl cysteine lipidation. C22 carries the S-diacylglycerol cysteine lipid modification. Residues D45, H47, D88, N120, H221, H256, and Q258 each coordinate a divalent metal cation. Residues F432 and 501–507 (FNAAGGD) each bind substrate.

This sequence belongs to the 5'-nucleotidase family. It depends on chloride as a cofactor. The cofactor is Mg(2+).

It is found in the cell outer membrane. It catalyses the reaction a ribonucleoside 5'-phosphate + H2O = a ribonucleoside + phosphate. Degradation of extracellular 5'-nucleotides for nutritional needs. The sequence is that of 5'-nucleotidase (nutA) from Vibrio cholerae serotype O1 (strain ATCC 39315 / El Tor Inaba N16961).